The following is a 102-amino-acid chain: NADH-quinone oxidoreductase subunit K (102 aa).

3 helical membrane-spanning segments follow: residues 5 to 25, 30 to 50, and 62 to 82; these read LSHFLIVAAMLFTIGVAGIIL, IIVVLMSVELILLSVNINLVS, and VFSLFVLTVAAAEAAIGLAIL.

This sequence belongs to the complex I subunit 4L family. In terms of assembly, NDH-1 is composed of 14 different subunits. Subunits NuoA, H, J, K, L, M, N constitute the membrane sector of the complex.

It is found in the cell inner membrane. The enzyme catalyses a quinone + NADH + 5 H(+)(in) = a quinol + NAD(+) + 4 H(+)(out). In terms of biological role, NDH-1 shuttles electrons from NADH, via FMN and iron-sulfur (Fe-S) centers, to quinones in the respiratory chain. The immediate electron acceptor for the enzyme in this species is believed to be ubiquinone. Couples the redox reaction to proton translocation (for every two electrons transferred, four hydrogen ions are translocated across the cytoplasmic membrane), and thus conserves the redox energy in a proton gradient. This chain is NADH-quinone oxidoreductase subunit K, found in Methylocella silvestris (strain DSM 15510 / CIP 108128 / LMG 27833 / NCIMB 13906 / BL2).